Here is a 208-residue protein sequence, read N- to C-terminus: ATP-dependent Clp protease proteolytic subunit (208 aa).

Residue S106 is the Nucleophile of the active site. The active site involves H131.

Belongs to the peptidase S14 family. As to quaternary structure, fourteen ClpP subunits assemble into 2 heptameric rings which stack back to back to give a disk-like structure with a central cavity, resembling the structure of eukaryotic proteasomes.

The protein resides in the cytoplasm. The enzyme catalyses Hydrolysis of proteins to small peptides in the presence of ATP and magnesium. alpha-casein is the usual test substrate. In the absence of ATP, only oligopeptides shorter than five residues are hydrolyzed (such as succinyl-Leu-Tyr-|-NHMec, and Leu-Tyr-Leu-|-Tyr-Trp, in which cleavage of the -Tyr-|-Leu- and -Tyr-|-Trp bonds also occurs).. Cleaves peptides in various proteins in a process that requires ATP hydrolysis. Has a chymotrypsin-like activity. Plays a major role in the degradation of misfolded proteins. The polypeptide is ATP-dependent Clp protease proteolytic subunit (Dinoroseobacter shibae (strain DSM 16493 / NCIMB 14021 / DFL 12)).